The following is a 455-amino-acid chain: UDP-N-acetylmuramate--L-alanine ligase (455 aa).

Position 109-115 (109-115 (GTHGKTT)) interacts with ATP.

It belongs to the MurCDEF family.

It is found in the cytoplasm. The enzyme catalyses UDP-N-acetyl-alpha-D-muramate + L-alanine + ATP = UDP-N-acetyl-alpha-D-muramoyl-L-alanine + ADP + phosphate + H(+). It participates in cell wall biogenesis; peptidoglycan biosynthesis. In terms of biological role, cell wall formation. In Caldicellulosiruptor saccharolyticus (strain ATCC 43494 / DSM 8903 / Tp8T 6331), this protein is UDP-N-acetylmuramate--L-alanine ligase.